A 468-amino-acid polypeptide reads, in one-letter code: Argininosuccinate lyase (468 aa).

It belongs to the lyase 1 family. Argininosuccinate lyase subfamily.

The protein localises to the cytoplasm. The enzyme catalyses 2-(N(omega)-L-arginino)succinate = fumarate + L-arginine. It functions in the pathway amino-acid biosynthesis; L-arginine biosynthesis; L-arginine from L-ornithine and carbamoyl phosphate: step 3/3. This chain is Argininosuccinate lyase, found in Paraburkholderia phytofirmans (strain DSM 17436 / LMG 22146 / PsJN) (Burkholderia phytofirmans).